The primary structure comprises 59 residues: Temporin-HN2 (59 aa).

An N-terminal signal peptide occupies residues 1-22; the sequence is MFTLKKSLLLLLFLGTINLSLS. The stretch at 16-44 forms a coiled coil; that stretch reads TINLSLSEQERDAKEERRDEMDVEVEKRN. Residues 23 to 41 constitute a propeptide that is removed on maturation; sequence EQERDAKEERRDEMDVEVE. L57 bears the Leucine amide mark.

Expressed by the skin glands.

It is found in the secreted. Functionally, has antimicrobial activity against some Gram-positive bacteria and fungi but has no activity against a range of Gram-negative bacteria except P.faecalis. Active against the Gram-positive bacteria S.aureus ATCC 25923 (MIC=4.8 uM), S.carnosus KHS (MIC=19 uM), B.licheniformis X39 (MIC=19 uM) and R.rhodochrous X15 (MIC=2.4 uM) but is inactive against E.faecium 091299 and E.faecalis 981. Has a less potent antimicrobial activity against the Gram-negative bacterium P.faecalis X29 (MIC=37.5 uM) and is inactive against E.coli, P.aeruginosa and S.typhi. Has antifungal activity against C.albicans ATCC 2002 (MIC=9.5 uM) and is also active against the slime mold 090223 (MIC=9.5 uM). Has extremely low hemolytic activity against human erythrocytes (LC(50)=300 uM). In Odorrana hainanensis (Odor frog), this protein is Temporin-HN2.